The sequence spans 72 residues: Translation initiation factor IF-1 2 (72 aa).

Positions 1 to 72 (MAKDDVIQMQ…SRARIVFRTK (72 aa)) constitute an S1-like domain.

This sequence belongs to the IF-1 family. Component of the 30S ribosomal translation pre-initiation complex which assembles on the 30S ribosome in the order IF-2 and IF-3, IF-1 and N-formylmethionyl-tRNA(fMet); mRNA recruitment can occur at any time during PIC assembly.

It localises to the cytoplasm. Functionally, one of the essential components for the initiation of protein synthesis. Stabilizes the binding of IF-2 and IF-3 on the 30S subunit to which N-formylmethionyl-tRNA(fMet) subsequently binds. Helps modulate mRNA selection, yielding the 30S pre-initiation complex (PIC). Upon addition of the 50S ribosomal subunit IF-1, IF-2 and IF-3 are released leaving the mature 70S translation initiation complex. The chain is Translation initiation factor IF-1 2 from Cupriavidus necator (strain ATCC 17699 / DSM 428 / KCTC 22496 / NCIMB 10442 / H16 / Stanier 337) (Ralstonia eutropha).